The chain runs to 100 residues: Urease subunit gamma (100 aa).

Belongs to the urease gamma subunit family. Heterotrimer of UreA (gamma), UreB (beta) and UreC (alpha) subunits. Three heterotrimers associate to form the active enzyme.

It is found in the cytoplasm. The enzyme catalyses urea + 2 H2O + H(+) = hydrogencarbonate + 2 NH4(+). Its pathway is nitrogen metabolism; urea degradation; CO(2) and NH(3) from urea (urease route): step 1/1. This chain is Urease subunit gamma, found in Trichormus variabilis (strain ATCC 29413 / PCC 7937) (Anabaena variabilis).